A 210-amino-acid polypeptide reads, in one-letter code: Protein GrpE (210 aa).

Disordered regions lie at residues 1 to 40 and 191 to 210; these read MTDD…PDPI and KGGP…EKDA. Over residues 11–23 the composition is skewed to low complexity; it reads DATAADAAADATA.

Belongs to the GrpE family. In terms of assembly, homodimer.

The protein resides in the cytoplasm. Its function is as follows. Participates actively in the response to hyperosmotic and heat shock by preventing the aggregation of stress-denatured proteins, in association with DnaK and GrpE. It is the nucleotide exchange factor for DnaK and may function as a thermosensor. Unfolded proteins bind initially to DnaJ; upon interaction with the DnaJ-bound protein, DnaK hydrolyzes its bound ATP, resulting in the formation of a stable complex. GrpE releases ADP from DnaK; ATP binding to DnaK triggers the release of the substrate protein, thus completing the reaction cycle. Several rounds of ATP-dependent interactions between DnaJ, DnaK and GrpE are required for fully efficient folding. The sequence is that of Protein GrpE from Rhizobium johnstonii (strain DSM 114642 / LMG 32736 / 3841) (Rhizobium leguminosarum bv. viciae).